The primary structure comprises 776 residues: Transferrin receptor protein 1 (776 aa).

Residues 1 to 70 (MDHARAALSN…QPQRNGKRLC (70 aa)) lie on the Cytoplasmic side of the membrane. The short motif at 19-22 (YTRF) is the Endocytosis signal element. Serine 23 is modified (phosphoserine). Cysteine 70 is lipidated: S-palmitoyl cysteine. The chain crosses the membrane as a helical; Signal-anchor for type II membrane protein span at residues 71–91 (FLVIAAVLLLLIGFLIGYLSY). Over 92–776 (RGRIELAARC…GDIWETDNEF (685 aa)) the chain is Extracellular. The region spanning 230–322 (SESGSVSGKP…GTGDPYTPGF (93 aa)) is the PA domain. N-linked (GlcNAc...) asparagine glycans are attached at residues asparagine 261, asparagine 326, and asparagine 391. A ligand-binding region spans residues 586-776 (KGDTLENLRK…GDIWETDNEF (191 aa)). The Cell attachment site signature appears at 662–664 (RGD). A glycan (N-linked (GlcNAc...) asparagine) is linked at asparagine 738.

It belongs to the peptidase M28 family. M28B subfamily. In terms of assembly, homodimer; disulfide-linked. Binds one transferrin molecule per subunit. Post-translationally, stearoylated. Stearoylation does not affect iron uptake. N- and O-glycosylated, phosphorylated and palmitoylated.

The protein resides in the cell membrane. The protein localises to the melanosome. Its function is as follows. Cellular uptake of iron occurs via receptor-mediated endocytosis of ligand-occupied transferrin receptor into specialized endosomes. Endosomal acidification leads to iron release. The apotransferrin-receptor complex is then recycled to the cell surface with a return to neutral pH and the concomitant loss of affinity of apotransferrin for its receptor. Transferrin receptor is necessary for development of erythrocytes and the nervous system. Acts as a lipid sensor that regulates mitochondrial fusion by regulating activation of the JNK pathway. When dietary levels of stearate (C18:0) are low, promotes activation of the JNK pathway, resulting in HUWE1-mediated ubiquitination and subsequent degradation of the mitofusin MFN2 and inhibition of mitochondrial fusion. When dietary levels of stearate (C18:0) are high, TFRC stearoylation inhibits activation of the JNK pathway and thus degradation of the mitofusin MFN2. Mediates uptake of NICOL1 into fibroblasts where it may regulate extracellular matrix production. This chain is Transferrin receptor protein 1 (TFRC), found in Gallus gallus (Chicken).